A 509-amino-acid chain; its full sequence is Probable aspartic-type endopeptidase CTSD (509 aa).

The signal sequence occupies residues 1-21; sequence MQFLWLCLLSAVTLQFTGTLA. Residues 102 to 408 enclose the Peptidase A1 domain; that stretch reads YFSEVKVGSE…DFDKNRVGLA (307 aa). The active site involves Asp-120. Residue Asn-174 is glycosylated (N-linked (GlcNAc...) asparagine). Residue Asp-302 is part of the active site. Asn-361 carries an N-linked (GlcNAc...) asparagine glycan. Residues 451 to 489 form a disordered region; the sequence is NKAPSGGSPGLPAESGSDSTTNGEATNGATSSPNSSSSV. The segment covering 466-480 has biased composition (polar residues); that stretch reads GSDSTTNGEATNGAT. Asn-484 carries N-linked (GlcNAc...) asparagine glycosylation. Ser-485 carries the GPI-anchor amidated serine lipid modification. Residues 486–509 constitute a propeptide, removed in mature form; sequence SSSVLTPTWLTLAVFFAIGSSLWS.

It belongs to the peptidase A1 family.

It is found in the cell membrane. Its function is as follows. Probable GPI-anchored aspartic-type endopeptidase which contributes to virulence. This Arthroderma benhamiae (strain ATCC MYA-4681 / CBS 112371) (Trichophyton mentagrophytes) protein is Probable aspartic-type endopeptidase CTSD (CTSD).